A 32-amino-acid polypeptide reads, in one-letter code: Acetolactate synthase, catabolic (32 aa).

This sequence belongs to the TPP enzyme family. In terms of assembly, homodimer.

The catalysed reaction is 2 pyruvate + H(+) = (2S)-2-acetolactate + CO2. It functions in the pathway polyol metabolism; (R,R)-butane-2,3-diol biosynthesis; (R,R)-butane-2,3-diol from pyruvate: step 1/3. The polypeptide is Acetolactate synthase, catabolic (budB) (Klebsiella aerogenes (Enterobacter aerogenes)).